Here is a 58-residue protein sequence, read N- to C-terminus: Large ribosomal subunit protein uL30 (58 aa).

Belongs to the universal ribosomal protein uL30 family. Part of the 50S ribosomal subunit.

This chain is Large ribosomal subunit protein uL30, found in Pseudomonas fluorescens (strain ATCC BAA-477 / NRRL B-23932 / Pf-5).